The sequence spans 63 residues: Putative conjugal transfer lipoprotein XF_a0011.1 (63 aa).

An N-terminal signal peptide occupies residues 1-15 (MRYTFGIVTVYLLAG). The N-palmitoyl cysteine moiety is linked to residue Cys-16. The S-diacylglycerol cysteine moiety is linked to residue Cys-16.

To B.suis ORF12 in VirB region.

The protein resides in the cell inner membrane. The polypeptide is Putative conjugal transfer lipoprotein XF_a0011.1 (Xylella fastidiosa (strain 9a5c)).